Here is a 442-residue protein sequence, read N- to C-terminus: Tyrosine-protein kinase transforming protein RYK (442 aa).

The Protein kinase domain maps to leucine 45–leucine 316. ATP contacts are provided by residues leucine 51–valine 59 and lysine 77. Aspartate 181 (proton acceptor) is an active-site residue. Tyrosine 212 is modified (phosphotyrosine; by autocatalysis).

This sequence belongs to the protein kinase superfamily. Tyr protein kinase family. AXL/UFO subfamily.

It is found in the host cell membrane. It catalyses the reaction L-tyrosyl-[protein] + ATP = O-phospho-L-tyrosyl-[protein] + ADP + H(+). The chain is Tyrosine-protein kinase transforming protein RYK (V-RYK) from Avian retrovirus RPL30.